The sequence spans 278 residues: HTH-type transcriptional activator RhaS (278 aa).

The region spanning 174-272 (NLLLAWLEDH…NWSPRDIRQG (99 aa)) is the HTH araC/xylS-type domain. 2 consecutive DNA-binding regions (H-T-H motif) follow at residues 191 to 212 (DAVADQFSLSLRTLHRQLKQQT) and 239 to 262 (VTDIAYRCGFSDSNHFSTLFRREF).

Binds DNA as a dimer.

It is found in the cytoplasm. Activates expression of the rhaBAD and rhaT operons. In Shigella boydii serotype 4 (strain Sb227), this protein is HTH-type transcriptional activator RhaS.